The chain runs to 1748 residues: RANBP2-like and GRIP domain-containing protein 1 (1748 aa).

Thr-14 carries the post-translational modification Phosphothreonine. TPR repeat units follow at residues 51-84, 575-608, and 639-672; these read PRAH…NPPQ, QKMG…LKII, and EDAH…VSYW. The interval 751–796 is disordered; it reads GPLYKNGSLRNADSEIKHSTPSPTKYSLSPSKSYKYSPKTPPRWAE. The segment covering 769-788 has biased composition (low complexity); sequence STPSPTKYSLSPSKSYKYSP. Residues 1021 to 1157 enclose the RanBD1 1 domain; the sequence is HFEPVVQMPE…FEECQRLLLD (137 aa). Disordered stretches follow at residues 1198–1233 and 1291–1316; these read TKVT…TLEW and AKLN…ERDG. The span at 1220-1229 shows a compositional bias: polar residues; sequence IKPNPENTGP. Positions 1302–1314 are enriched in acidic residues; that stretch reads TDEESDVTQEEER. A RanBD1 2 domain is found at 1318–1454; the sequence is YFEPVVPLPD…FDEAKTAQEK (137 aa). Residues 1565-1578 show a composition bias toward polar residues; the sequence is NDSETSSVAQSGSE. Residues 1565–1606 form a disordered region; that stretch reads NDSETSSVAQSGSESKVEPKKCELSKNSDIEQSSDSKVKNLS. Positions 1579–1602 are enriched in basic and acidic residues; sequence SKVEPKKCELSKNSDIEQSSDSKV. The 51-residue stretch at 1685–1735 folds into the GRIP domain; sequence QEESAANVEHLKNVLLQFIFLKPGSERESLLPVINTMLQLSPEEKGKLAAV.

This chain is RANBP2-like and GRIP domain-containing protein 1 (RGPD1), found in Homo sapiens (Human).